Consider the following 247-residue polypeptide: Probable transcriptional regulatory protein ECA2494 (247 aa).

This sequence belongs to the TACO1 family.

It localises to the cytoplasm. The protein is Probable transcriptional regulatory protein ECA2494 of Pectobacterium atrosepticum (strain SCRI 1043 / ATCC BAA-672) (Erwinia carotovora subsp. atroseptica).